Consider the following 345-residue polypeptide: Holliday junction branch migration complex subunit RuvB (345 aa).

The interval 4-185 (LDNRFVTPLS…FGVLCPMEFY (182 aa)) is large ATPase domain (RuvB-L). ATP-binding positions include Leu24, Arg25, Gly66, Lys69, Thr70, Thr71, 132 to 134 (EDY), Arg175, Tyr185, and Arg222. Residue Thr70 participates in Mg(2+) binding. The small ATPAse domain (RuvB-S) stretch occupies residues 186-256 (NEEELKDIIV…MTNKALNLLE (71 aa)). The interval 259 to 345 (KEGFDSIDTK…ENINQYKFKI (87 aa)) is head domain (RuvB-H). The DNA site is built by Arg314 and Arg319.

This sequence belongs to the RuvB family. Homohexamer. Forms an RuvA(8)-RuvB(12)-Holliday junction (HJ) complex. HJ DNA is sandwiched between 2 RuvA tetramers; dsDNA enters through RuvA and exits via RuvB. An RuvB hexamer assembles on each DNA strand where it exits the tetramer. Each RuvB hexamer is contacted by two RuvA subunits (via domain III) on 2 adjacent RuvB subunits; this complex drives branch migration. In the full resolvosome a probable DNA-RuvA(4)-RuvB(12)-RuvC(2) complex forms which resolves the HJ.

The protein localises to the cytoplasm. It carries out the reaction ATP + H2O = ADP + phosphate + H(+). The RuvA-RuvB-RuvC complex processes Holliday junction (HJ) DNA during genetic recombination and DNA repair, while the RuvA-RuvB complex plays an important role in the rescue of blocked DNA replication forks via replication fork reversal (RFR). RuvA specifically binds to HJ cruciform DNA, conferring on it an open structure. The RuvB hexamer acts as an ATP-dependent pump, pulling dsDNA into and through the RuvAB complex. RuvB forms 2 homohexamers on either side of HJ DNA bound by 1 or 2 RuvA tetramers; 4 subunits per hexamer contact DNA at a time. Coordinated motions by a converter formed by DNA-disengaged RuvB subunits stimulates ATP hydrolysis and nucleotide exchange. Immobilization of the converter enables RuvB to convert the ATP-contained energy into a lever motion, pulling 2 nucleotides of DNA out of the RuvA tetramer per ATP hydrolyzed, thus driving DNA branch migration. The RuvB motors rotate together with the DNA substrate, which together with the progressing nucleotide cycle form the mechanistic basis for DNA recombination by continuous HJ branch migration. Branch migration allows RuvC to scan DNA until it finds its consensus sequence, where it cleaves and resolves cruciform DNA. This chain is Holliday junction branch migration complex subunit RuvB, found in Clostridium tetani (strain Massachusetts / E88).